The sequence spans 507 residues: Extracellular elastase (507 aa).

The signal sequence occupies residues 1 to 28 (MKNFSKFALTSIAALTVASPLVNTEVDA). A propeptide spanning residues 29 to 207 (KDKVSATQNI…VVDKLNMIKE (179 aa)) is cleaved from the precursor. Asp347 is a Ca(2+) binding site. His351 lines the Zn(2+) pocket. The active site involves Glu352. Residues His355 and Glu375 each contribute to the Zn(2+) site. Ca(2+) is bound by residues Asp386, Glu388, Asp389, Leu391, Glu394, Tyr397, Thr398, Val401, and Asp404. His435 (proton donor) is an active-site residue.

Belongs to the peptidase M4 family. It depends on Ca(2+) as a cofactor. The cofactor is Zn(2+).

It is found in the secreted. Functionally, protease that has a low substrate specificity. Glucagon is preferentially cleaved between aromatic (Phe) and hydrophobic (Val) amino acids. Hydrolyzes casein and elastin. This Staphylococcus epidermidis (strain ATCC 12228 / FDA PCI 1200) protein is Extracellular elastase (sepA).